A 38-amino-acid chain; its full sequence is Bacteriocin curvaticin FS47 (38 aa).

Its subcellular location is the secreted. Bacteriocin active against Listeria monocytogenes, Pediococcus, Enterococcus, Lactobacilli and Bacilli. The chain is Bacteriocin curvaticin FS47 from Latilactobacillus curvatus (Lactobacillus curvatus).